Here is a 387-residue protein sequence, read N- to C-terminus: uncharacterized protein (387 aa).

This sequence belongs to the geranylgeranyl reductase family. ChlP subfamily.

This is an uncharacterized protein from Methanocaldococcus jannaschii (strain ATCC 43067 / DSM 2661 / JAL-1 / JCM 10045 / NBRC 100440) (Methanococcus jannaschii).